Reading from the N-terminus, the 546-residue chain is Chaperonin GroEL (546 aa).

ATP-binding positions include 30–33 (TLGP), Lys-51, 87–91 (DGTTT), Gly-415, 479–481 (NAA), and Asp-495. Residues 526 to 546 (KEDAPMPGGMPGGMGGMGMDM) are disordered. A compositionally biased stretch (gly residues) spans 534-546 (GMPGGMGGMGMDM).

It belongs to the chaperonin (HSP60) family. In terms of assembly, forms a cylinder of 14 subunits composed of two heptameric rings stacked back-to-back. Interacts with the co-chaperonin GroES.

The protein resides in the cytoplasm. The catalysed reaction is ATP + H2O + a folded polypeptide = ADP + phosphate + an unfolded polypeptide.. Together with its co-chaperonin GroES, plays an essential role in assisting protein folding. The GroEL-GroES system forms a nano-cage that allows encapsulation of the non-native substrate proteins and provides a physical environment optimized to promote and accelerate protein folding. This Burkholderia thailandensis protein is Chaperonin GroEL.